The following is a 610-amino-acid chain: uncharacterized protein (610 aa).

The span at 1 to 28 shows a compositional bias: polar residues; it reads MDSPSTSESPLKKNTIQDFGESNMTESP. Residues 1-36 form a disordered region; that stretch reads MDSPSTSESPLKKNTIQDFGESNMTESPQSKEEIDE. The RING-type zinc finger occupies 41 to 82; it reads CSVCKNEIIDTTSLSDCCHEFCYDCIVGWLTKGSGPFCPMCK. Disordered regions lie at residues 390–411 and 431–515; these read YRGQ…FRPA and TSSA…SADR. Over residues 432-447 the composition is skewed to low complexity; it reads SSAGAGSARSRGSDSV. Acidic residues-rich tracts occupy residues 448 to 470 and 478 to 487; these read VEID…EDSD and SEEDSDEEIQ.

This is an uncharacterized protein from Caenorhabditis elegans.